Consider the following 476-residue polypeptide: Glutamate--tRNA ligase (476 aa).

Residues proline 9–threonine 19 carry the 'HIGH' region motif. The 'KMSKS' region signature appears at lysine 248–arginine 252. Lysine 251 serves as a coordination point for ATP.

This sequence belongs to the class-I aminoacyl-tRNA synthetase family. Glutamate--tRNA ligase type 1 subfamily. Monomer.

It is found in the cytoplasm. It catalyses the reaction tRNA(Glu) + L-glutamate + ATP = L-glutamyl-tRNA(Glu) + AMP + diphosphate. Functionally, catalyzes the attachment of glutamate to tRNA(Glu) in a two-step reaction: glutamate is first activated by ATP to form Glu-AMP and then transferred to the acceptor end of tRNA(Glu). The polypeptide is Glutamate--tRNA ligase (Synechococcus sp. (strain CC9311)).